We begin with the raw amino-acid sequence, 375 residues long: MNPIHARFSSVEALRHSNVDIQAIKSEGQLEVNGKRYEIRAAADGSIAVLRPDQQSKADKFFKGAAHLIGGQSQRAQIAQVLNEKAAAVPRLDRMLGRRFDLEKGGSSAVGAAIKAADSRLTSKQTFASFQQWAEKAEALGRYRNRYLHDLQEGHARHNAYECGRVKNITWKRYRLSITRKTLSYAPQIHDDREEEELDLGRYIAEDRNARTGFFRMVPKDQRAPETNSGRLTIGVEPKYGAQLALAMATLMDKHKSVTQGKVVGPAKYGQQTDSAILYINGDLAKAVKLGEKLKKLSGIPPEGFVEHTPLSMQSTGLGLSYAESVEGQPSSHGQARTHVIMDALKGQGPMENRLKMALAERGYDPENPALRARN.

Its function is as follows. Unknown. May serve a regulatory function. The chain is Protein HrmA (hrmA) from Pseudomonas syringae pv. syringae.